Reading from the N-terminus, the 348-residue chain is Protein DMR6-LIKE OXYGENASE 2 (348 aa).

Positions 194-294 (KHGQHMAINY…RISIPTFYCP (101 aa)) constitute a Fe2OG dioxygenase domain. Residues His-219, Asp-221, and His-275 each coordinate Fe cation. Arg-285 is a binding site for 2-oxoglutarate.

The protein belongs to the iron/ascorbate-dependent oxidoreductase family. It depends on Fe(2+) as a cofactor.

It carries out the reaction salicylate + NADH + O2 + H(+) = 2,3-dihydroxybenzoate + NAD(+) + H2O. Its function is as follows. Converts salicylic acid (SA) to 2,3-dihydroxybenzoic acid (2,3-DHBA). Negative regulator of defense against Hyaloperonospora arabidopsidis. (Microbial infection) Confers susceptibility to the downy mildew pathogen Hyaloperonospora arabidopsidis. The protein is Protein DMR6-LIKE OXYGENASE 2 of Arabidopsis thaliana (Mouse-ear cress).